The sequence spans 130 residues: Small ribosomal subunit protein uS11 (130 aa).

This sequence belongs to the universal ribosomal protein uS11 family. Part of the 30S ribosomal subunit. Interacts with proteins S7 and S18. Binds to IF-3.

Located on the platform of the 30S subunit, it bridges several disparate RNA helices of the 16S rRNA. Forms part of the Shine-Dalgarno cleft in the 70S ribosome. This chain is Small ribosomal subunit protein uS11, found in Aliarcobacter butzleri (strain RM4018) (Arcobacter butzleri).